We begin with the raw amino-acid sequence, 1210 residues long: Epidermal growth factor receptor (1210 aa).

The signal sequence occupies residues 1–24 (MRPSGTAGAALLALLAALCPASRA). The Extracellular portion of the chain corresponds to 25-645 (LEEKKVCQGT…CARNGPKIPS (621 aa)). Cys31 and Cys58 are joined by a disulfide. The stretch at 75–300 (DLSFLKTIQE…CVKKCPRNYV (226 aa)) is one Approximate repeat. N-linked (GlcNAc...) asparagine glycans are attached at residues Asn128, Asn175, and Asn196. Intrachain disulfides connect Cys157-Cys187, Cys190-Cys199, Cys194-Cys207, Cys215-Cys223, Cys219-Cys231, Cys232-Cys240, Cys236-Cys248, Cys251-Cys260, Cys264-Cys291, Cys295-Cys307, Cys311-Cys326, Cys329-Cys333, and Cys337-Cys362. Ser229 carries the phosphoserine modification. 4 N-linked (GlcNAc...) asparagine glycosylation sites follow: Asn352, Asn361, Asn413, and Asn444. An Approximate repeat occupies 390 to 600 (QELDILKTVK…CVKTCPAGVM (211 aa)). Disulfide bonds link Cys470-Cys499, Cys506-Cys515, Cys510-Cys523, Cys526-Cys535, Cys539-Cys555, Cys558-Cys571, Cys562-Cys579, Cys582-Cys591, Cys595-Cys617, Cys620-Cys628, and Cys624-Cys636. Asn528 carries N-linked (GlcNAc...) asparagine glycosylation. Asn568 is a glycosylation site (N-linked (GlcNAc...) asparagine). The N-linked (GlcNAc...) asparagine glycan is linked to Asn603. Residues 646–668 (IATGMVGALLLLLVVALGIGLFM) traverse the membrane as a helical segment. The Cytoplasmic segment spans residues 669–1210 (RRRHIVRKRT…APQSSEFIGA (542 aa)). Thr678 carries the phosphothreonine; by PKC and PKD/PRKD1 modification. Positions 688 to 704 (LVEPLTPSGEAPNQALL) are important for dimerization, phosphorylation and activation. Phosphothreonine; by PKD/PRKD1 is present on Thr693. Residue Ser695 is modified to Phosphoserine. One can recognise a Protein kinase domain in the interval 712-979 (FKKIKVLGSG…KMARDPQRYL (268 aa)). Residue Lys716 forms a Glycyl lysine isopeptide (Lys-Gly) (interchain with G-Cter in ubiquitin) linkage. 718–726 (LGSGAFGTV) provides a ligand contact to ATP. A Glycyl lysine isopeptide (Lys-Gly) (interchain with G-Cter in ubiquitin) cross-link involves residue Lys737. An ATP-binding site is contributed by Lys745. Position 745 is an N6-(2-hydroxyisobutyryl)lysine (Lys745). Glycyl lysine isopeptide (Lys-Gly) (interchain with G-Cter in ubiquitin) cross-links involve residues Lys754 and Lys757. Residue 790–791 (TQ) coordinates ATP. Residue Asp837 is the Proton acceptor of the active site. An ATP-binding site is contributed by Asp855. A Glycyl lysine isopeptide (Lys-Gly) (interchain with G-Cter in ubiquitin) cross-link involves residue Lys867. At Tyr869 the chain carries Phosphotyrosine. Glycyl lysine isopeptide (Lys-Gly) (interchain with G-Cter in ubiquitin) cross-links involve residues Lys929, Lys960, and Lys970. A phosphoserine mark is found at Ser991 and Ser995. A phosphotyrosine; by autocatalysis mark is found at Tyr998 and Tyr1016. Phosphoserine is present on residues Ser1026 and Ser1039. Phosphothreonine is present on Thr1041. Ser1042 bears the Phosphoserine mark. Cys1049 carries S-palmitoyl cysteine lipidation. Ser1064 carries the phosphoserine modification. Tyr1069 carries the phosphotyrosine modification. A phosphoserine mark is found at Ser1070, Ser1071, and Ser1081. Phosphotyrosine; by autocatalysis is present on residues Tyr1092 and Tyr1110. Residues 1097 to 1137 (VPKRPAGSVQNPVYHNQPLNPAPSRDPHYQDPHSTAVGNPE) are disordered. 2 stretches are compositionally biased toward polar residues: residues 1104-1115 (SVQNPVYHNQPL) and 1128-1137 (PHSTAVGNPE). Cys1146 carries the S-palmitoyl cysteine lipid modification. Residue Ser1166 is modified to Phosphoserine. A phosphotyrosine; by autocatalysis mark is found at Tyr1172 and Tyr1197. Arg1199 bears the Omega-N-methylarginine mark.

This sequence belongs to the protein kinase superfamily. Tyr protein kinase family. EGF receptor subfamily. Binding of the ligand triggers homo- and/or heterodimerization of the receptor triggering its autophosphorylation. Heterodimer with ERBB2. Forms a complex with CCDC88A/GIV (via SH2-like regions) and GNAI3 which leads to enhanced EGFR signaling and triggering of cell migration; binding to CCDC88A requires autophosphorylation of the EGFR C-terminal region, and ligand stimulation is required for recruitment of GNAI3 to the complex. Interacts with ERRFI1; inhibits dimerization of the kinase domain and autophosphorylation. Part of a complex with ERBB2 and either PIK3C2A or PIK3C2B. Interacts with GRB2; an adapter protein coupling the receptor to downstream signaling pathways. Interacts with GAB2; involved in signaling downstream of EGFR. Interacts with STAT3; mediates EGFR downstream signaling in cell proliferation. Interacts with RIPK1; involved in NF-kappa-B activation. Interacts (autophosphorylated) with CBL, CBLB and CBLC; involved in EGFR ubiquitination and regulation; interaction with CBL is reduced in the presence of tensin TNS4. Interacts with SOCS5; regulates EGFR degradation through ELOC- and ELOB-mediated ubiquitination and proteasomal degradation. Interacts with PRMT5; methylates EGFR and enhances interaction with PTPN6. Interacts (phosphorylated) with PTPN6; inhibits EGFR-dependent activation of MAPK/ERK. Interacts with COPG1; essential for regulation of EGF-dependent nuclear transport of EGFR by retrograde trafficking from the Golgi to the ER. Interacts with TNK2; this interaction is dependent on EGF stimulation and kinase activity of EGFR. Interacts with PCNA; positively regulates PCNA. Interacts with PELP1. Interacts with MUC1. Interacts with AP2M1. Interacts with FER. May interact with EPS8; mediates EPS8 phosphorylation. Interacts (via SH2 domains) with GRB2, NCK1 and NCK2. Interacts with ATXN2. Interacts with GAREM1. Interacts (ubiquitinated) with ANKRD13A/B/D; the interaction is direct and may regulate EGFR internalization after EGF stimulation. Interacts with GPER1; the interaction occurs in an estrogen-dependent manner. Interacts (via C-terminal cytoplasmic kinase domain) with ZPR1 (via zinc fingers). Interacts with RNF115 and RNF126. Interacts with GPRC5A (via its transmembrane domain). Interacts with FAM83B; positively regulates EGFR inducing its autophosphorylation in absence of stimulation by EGF. Interacts with LAPTM4B; positively correlates with EGFR activation. Interacts with STX19. Interacts with CD44. Interacts with PGRMC1; the interaction requires PGRMC1 homodimerization. Interacts with PIKFYVE. Interacts with NEU3. Interacts with TRAF4. Interacts with the ant venom OMEGA-myrmeciitoxin(02)-Mg1a. Interacts with CD82; this interaction facilitates ligand-induced endocytosis of the receptor and its subsequent desensitization. Post-translationally, phosphorylated on Tyr residues in response to EGF. Phosphorylation at Ser-695 is partial and occurs only if Thr-693 is phosphorylated. Phosphorylation at Thr-678 and Thr-693 by PRKD1 inhibits EGF-induced MAPK8/JNK1 activation. Dephosphorylation by PTPRJ prevents endocytosis and stabilizes the receptor at the plasma membrane. Autophosphorylation at Tyr-1197 is stimulated by methylation at Arg-1199 and enhances interaction with PTPN6. Autophosphorylation at Tyr-1092 and/or Tyr-1110 recruits STAT3. Dephosphorylated by PTPN1 and PTPN2. Monoubiquitinated and polyubiquitinated upon EGF stimulation; which does not affect tyrosine kinase activity or signaling capacity but may play a role in lysosomal targeting. Polyubiquitin linkage is mainly through 'Lys-63', but linkage through 'Lys-48', 'Lys-11' and 'Lys-29' also occurs. Deubiquitination by OTUD7B prevents degradation. Ubiquitinated by RNF115 and RNF126. Ubiquitinated by ZNRF1 or CBL at different lysines in response to EGF stimulation; leading to recruitment of the ESCRT machinery and subsequent degradation in the lysosomes. Deubiquitinated by UCHL1 leading to the inhibition of its degradation. In terms of processing, palmitoylated on Cys residues by ZDHHC20. Palmitoylation inhibits internalization after ligand binding, and increases the persistence of tyrosine-phosphorylated EGFR at the cell membrane. Palmitoylation increases the amplitude and duration of EGFR signaling. Post-translationally, methylated. Methylation at Arg-1199 by PRMT5 stimulates phosphorylation at Tyr-1197. Hypothalamus.

The protein localises to the cell membrane. It is found in the endoplasmic reticulum membrane. It localises to the golgi apparatus membrane. Its subcellular location is the nucleus membrane. The protein resides in the endosome. The protein localises to the endosome membrane. It is found in the nucleus. The enzyme catalyses L-tyrosyl-[protein] + ATP = O-phospho-L-tyrosyl-[protein] + ADP + H(+). With respect to regulation, endocytosis and inhibition of the activated EGFR by phosphatases like PTPRJ and PTPRK constitute immediate regulatory mechanisms. Upon EGF-binding phosphorylates EPS15 that regulates EGFR endocytosis and activity. Moreover, inducible feedback inhibitors including LRIG1, SOCS4, SOCS5 and ERRFI1 constitute alternative regulatory mechanisms for the EGFR signaling. In terms of biological role, receptor tyrosine kinase binding ligands of the EGF family and activating several signaling cascades to convert extracellular cues into appropriate cellular responses. Known ligands include EGF, TGFA/TGF-alpha, AREG, epigen/EPGN, BTC/betacellulin, epiregulin/EREG and HBEGF/heparin-binding EGF. Ligand binding triggers receptor homo- and/or heterodimerization and autophosphorylation on key cytoplasmic residues. The phosphorylated receptor recruits adapter proteins like GRB2 which in turn activates complex downstream signaling cascades. Activates at least 4 major downstream signaling cascades including the RAS-RAF-MEK-ERK, PI3 kinase-AKT, PLCgamma-PKC and STATs modules. May also activate the NF-kappa-B signaling cascade. Also directly phosphorylates other proteins like RGS16, activating its GTPase activity and probably coupling the EGF receptor signaling to the G protein-coupled receptor signaling. Also phosphorylates MUC1 and increases its interaction with SRC and CTNNB1/beta-catenin. Positively regulates cell migration via interaction with CCDC88A/GIV which retains EGFR at the cell membrane following ligand stimulation, promoting EGFR signaling which triggers cell migration. Plays a role in enhancing learning and memory performance. Plays a role in mammalian pain signaling (long-lasting hypersensitivity). The sequence is that of Epidermal growth factor receptor (EGFR) from Macaca mulatta (Rhesus macaque).